The sequence spans 300 residues: Zinc finger protein RME1 (300 aa).

Residues Gln80–Glu90 are compositionally biased toward polar residues. The disordered stretch occupies residues Gln80 to Glu100. C2H2-type zinc fingers lie at residues Tyr178–Glu199, Cys206–His234, and Leu256–His281.

It is found in the nucleus. In terms of biological role, involved in the control of meiosis. Represses the transcription of the IME1 gene thereby inhibiting cells from entering meiosis. But also activates the CLN2 gene thus promoting mitosis. This is Zinc finger protein RME1 (RME1) from Saccharomyces cerevisiae (strain ATCC 204508 / S288c) (Baker's yeast).